The primary structure comprises 336 residues: tRNA-cytidine(32) 2-sulfurtransferase (336 aa).

Residues 1–42 (MNAPDTLTGLEANAPVTEEAPAASEAERKRAHTRREQKEQYE) form a disordered region. Positions 75 to 80 (SGGKDS) match the PP-loop motif motif. [4Fe-4S] cluster is bound by residues Cys150, Cys153, and Cys241. The tract at residues 301–328 (PHGDIAFDEEPCSADSASNQTQRPSQTV) is disordered. Positions 315-328 (DSASNQTQRPSQTV) are enriched in polar residues.

The protein belongs to the TtcA family. In terms of assembly, homodimer. Mg(2+) is required as a cofactor. The cofactor is [4Fe-4S] cluster.

It is found in the cytoplasm. It carries out the reaction cytidine(32) in tRNA + S-sulfanyl-L-cysteinyl-[cysteine desulfurase] + AH2 + ATP = 2-thiocytidine(32) in tRNA + L-cysteinyl-[cysteine desulfurase] + A + AMP + diphosphate + H(+). It functions in the pathway tRNA modification. Functionally, catalyzes the ATP-dependent 2-thiolation of cytidine in position 32 of tRNA, to form 2-thiocytidine (s(2)C32). The sulfur atoms are provided by the cysteine/cysteine desulfurase (IscS) system. The protein is tRNA-cytidine(32) 2-sulfurtransferase of Paraburkholderia phymatum (strain DSM 17167 / CIP 108236 / LMG 21445 / STM815) (Burkholderia phymatum).